A 135-amino-acid chain; its full sequence is Large ribosomal subunit protein mL41B (135 aa).

The transit peptide at 1 to 13 (MGLITKIARGLVR) directs the protein to the mitochondrion.

It belongs to the mitochondrion-specific ribosomal protein mL41 family. As to quaternary structure, component of the mitochondrial ribosome large subunit (39S) which comprises a 16S rRNA and about 50 distinct proteins.

The protein localises to the mitochondrion. Component of the mitochondrial ribosome large subunit. Also involved in apoptosis and cell cycle. The protein is Large ribosomal subunit protein mL41B (mrpl41-b) of Xenopus laevis (African clawed frog).